A 301-amino-acid polypeptide reads, in one-letter code: uncharacterized protein (301 aa).

The N-terminal stretch at 1–21 (MKIKLILVLIVFLTIVNVNNS) is a signal peptide. N-linked (GlcNAc...) asparagine glycosylation is found at N19, N59, N102, and N180.

It localises to the secreted. This is an uncharacterized protein from Dictyostelium discoideum (Social amoeba).